Consider the following 633-residue polypeptide: Probable potassium transport system protein Kup 2 (633 aa).

Helical transmembrane passes span 18 to 38 (FVGL…TSPL), 61 to 81 (LISL…VLFL), 107 to 127 (VPVL…DAMI), 143 to 163 (ITPA…IVLF), 176 to 196 (FFGP…VIHI), 211 to 231 (ALSF…AVFL), 255 to 275 (WFVL…ALVL), 293 to 313 (ALLP…QAVI), 345 to 365 (IYVP…IFSF), 371 to 391 (LATA…MLAF), 402 to 422 (FMLA…FLAA), and 429 to 449 (DGGW…WTWT).

The protein belongs to the HAK/KUP transporter (TC 2.A.72) family.

The protein localises to the cell inner membrane. It carries out the reaction K(+)(in) + H(+)(in) = K(+)(out) + H(+)(out). Transport of potassium into the cell. Likely operates as a K(+):H(+) symporter. The protein is Probable potassium transport system protein Kup 2 of Rhizobium etli (strain ATCC 51251 / DSM 11541 / JCM 21823 / NBRC 15573 / CFN 42).